The sequence spans 240 residues: Insulin-like growth factor-binding protein 3 receptor (240 aa).

The first 38 residues, 1 to 38 (MGSCQAGHNLHLCLAHHPPLVCATLILLLLGLSGLGLG), serve as a signal peptide directing secretion. Topologically, residues 39 to 204 (GFLLTHTTGL…SEELALCGSR (166 aa)) are extracellular. N-linked (GlcNAc...) asparagine glycosylation occurs at Asn167. A helical membrane pass occupies residues 205-225 (VLGLGFFLVLLCGLLCCTTAV). Residues 226–240 (CFHPRPEFHWSRTRL) lie on the Cytoplasmic side of the membrane.

As to quaternary structure, interacts with IGFBP3. Interacts with CASP8.

The protein localises to the cell membrane. In terms of biological role, cell death receptor specific for IGFBP3, may mediate caspase-8-dependent apoptosis upon ligand binding. The sequence is that of Insulin-like growth factor-binding protein 3 receptor (Tmem219) from Mus musculus (Mouse).